The following is a 583-amino-acid chain: 2-succinyl-5-enolpyruvyl-6-hydroxy-3-cyclohexene-1-carboxylate synthase (583 aa).

The protein belongs to the TPP enzyme family. MenD subfamily. Homodimer. The cofactor is Mg(2+). It depends on Mn(2+) as a cofactor. Thiamine diphosphate is required as a cofactor.

It catalyses the reaction isochorismate + 2-oxoglutarate + H(+) = 5-enolpyruvoyl-6-hydroxy-2-succinyl-cyclohex-3-ene-1-carboxylate + CO2. It functions in the pathway quinol/quinone metabolism; 1,4-dihydroxy-2-naphthoate biosynthesis; 1,4-dihydroxy-2-naphthoate from chorismate: step 2/7. Its pathway is quinol/quinone metabolism; menaquinone biosynthesis. In terms of biological role, catalyzes the thiamine diphosphate-dependent decarboxylation of 2-oxoglutarate and the subsequent addition of the resulting succinic semialdehyde-thiamine pyrophosphate anion to isochorismate to yield 2-succinyl-5-enolpyruvyl-6-hydroxy-3-cyclohexene-1-carboxylate (SEPHCHC). In Chlorobium limicola (strain DSM 245 / NBRC 103803 / 6330), this protein is 2-succinyl-5-enolpyruvyl-6-hydroxy-3-cyclohexene-1-carboxylate synthase.